The sequence spans 150 residues: Helix-loop-helix protein hlh-12 (150 aa).

A disordered region spans residues 1 to 24; it reads MAKKPRVTKLNTDRRSRANERERQ. The span at 11–24 shows a compositional bias: basic and acidic residues; the sequence is NTDRRSRANERERQ. A basic motif region spans residues 13 to 26; sequence DRRSRANERERQRV. In terms of domain architecture, bHLH spans 13–65; it reads DRRSRANERERQRVSEMNGMFDVLLNLLPPSHFKTRLSRVQILREATSYIIRL. The helix-loop-helix motif stretch occupies residues 27 to 65; sequence SEMNGMFDVLLNLLPPSHFKTRLSRVQILREATSYIIRL.

Forms a heterodimer with helix-loop-helix protein hlh-2.

It is found in the nucleus. Functionally, transcription factor which binds the E box motif 5'-GCAGGTG-3'. Involved in migration of the gonadal leader cells; distal tip cells (DTCs) in hermaphrodites, and linker cells in males. Positively regulates expression of alpha integrin ina-1 and ADAMTS protease gon-1. The sequence is that of Helix-loop-helix protein hlh-12 from Caenorhabditis elegans.